A 505-amino-acid chain; its full sequence is Metalloprotease TIKI1 (505 aa).

A signal peptide spans 1–19 (MSPWSWFLLQTLCLLPTGA). At 20–477 (ASRRGAPGTA…RRGHSHHSQM (458 aa)) the chain is on the extracellular side. Residues Asn-220, Asn-229, Asn-278, and Asn-336 are each glycosylated (N-linked (GlcNAc...) asparagine). The segment at 389 to 428 (PEAVSSGHSTLPPLVSRPGSADTPSEAEQRFRKKRRRSQR) is disordered. Basic residues predominate over residues 419-428 (FRKKRRRSQR). Residues 478–498 (VASSACLSLWTPVFWVLVLAF) traverse the membrane as a helical segment. Topologically, residues 499–505 (QTETPLL) are cytoplasmic.

It belongs to the TIKI family. The cofactor is Mn(2+). It depends on Co(2+) as a cofactor.

Its subcellular location is the cell membrane. Functionally, metalloprotease that acts as a negative regulator of the Wnt signaling pathway by mediating the cleavage of the 8 N-terminal residues of a subset of Wnt proteins. Following cleavage, Wnt proteins become oxidized and form large disulfide-bond oligomers, leading to their inactivation. Able to cleave WNT3A, WNT5, but not WNT11. Required for head formation. The sequence is that of Metalloprotease TIKI1 (TRABD2A) from Homo sapiens (Human).